The following is a 292-amino-acid chain: 11-beta-hydroxysteroid dehydrogenase 1 (292 aa).

Residues 2–7 (HFMKKY) are Cytoplasmic-facing. Residues 8 to 24 (LLPILVLFLAYYYYSTK) traverse the membrane as a helical; Signal-anchor for type II membrane protein segment. At 25-292 (EEFRPEMLQG…SFTFDKLISS (268 aa)) the chain is on the lumenal side. Residues 41–67 (GASK…TARS), 92–93 (TM), and 119–121 (NHI) each bind NADP(+). A glycan (N-linked (GlcNAc...) asparagine) is linked at N162. Residue S170 coordinates substrate. The active-site Proton acceptor is the Y183. Residue 183 to 187 (YSASK) coordinates NADP(+). N207 is a glycosylation site (N-linked (GlcNAc...) asparagine). An NADP(+)-binding site is contributed by 218-222 (INTET).

It belongs to the short-chain dehydrogenases/reductases (SDR) family. As to quaternary structure, homodimer. In terms of tissue distribution, detected in adrenal gland, liver, kidney, testis, and at lower levels in brain and lung (at protein level).

It localises to the endoplasmic reticulum membrane. It carries out the reaction an 11beta-hydroxysteroid + NADP(+) = an 11-oxosteroid + NADPH + H(+). The enzyme catalyses corticosterone + NADP(+) = 11-dehydrocorticosterone + NADPH + H(+). The catalysed reaction is a 7beta-hydroxysteroid + NADP(+) = a 7-oxosteroid + NADPH + H(+). It catalyses the reaction 7-oxocholesterol + NADPH + H(+) = 7beta-hydroxycholesterol + NADP(+). It carries out the reaction 7-oxocholesterol + NADPH + H(+) = 7alpha-hydroxycholesterol + NADP(+). The enzyme catalyses chenodeoxycholate + NADP(+) = 7-oxolithocholate + NADPH + H(+). The catalysed reaction is 7-oxolithocholate + NADPH + H(+) = ursodeoxycholate + NADP(+). It catalyses the reaction glycochenodeoxycholate + NADP(+) = 7-oxoglycolithocholate + NADPH + H(+). It carries out the reaction taurochenodeoxycholate + NADP(+) = 7-oxotaurolithocholate + NADPH + H(+). The enzyme catalyses tauroursodeoxycholate + NADP(+) = 7-oxotaurolithocholate + NADPH + H(+). The catalysed reaction is glycoursodeoxycholate + NADP(+) = 7-oxoglycolithocholate + NADPH + H(+). It catalyses the reaction 7-oxopregnenolone + NADPH + H(+) = 7beta-hydroxypregnenolone + NADP(+). It carries out the reaction 3beta,7alpha-dihydroxyandrost-5-en-17-one + NADP(+) = 3beta-hydroxy-5-androstene-7,17-dione + NADPH + H(+). The enzyme catalyses 3beta-hydroxy-5-androstene-7,17-dione + NADPH + H(+) = 3beta,7beta-dihydroxyandrost-5-en-17-one + NADP(+). The catalysed reaction is 3beta-hydroxy-5alpha-androstane-7,17-dione + NADPH + H(+) = 3beta,7beta-dihydroxy-5alpha-androstan-17-one + NADP(+). It participates in steroid metabolism. In terms of biological role, controls the reversible conversion of biologically active glucocorticoids such as 11-dehydrocorticosterone to corticosterone in the presence of NADP(H). Participates in the corticosteroid receptor-mediated anti-inflammatory response, as well as metabolic and homeostatic processes. Bidirectional in vitro, predominantly functions as a reductase in vivo, thereby increasing the concentration of active glucocorticoids. It has broad substrate specificity, besides glucocorticoids, it accepts other steroid and sterol substrates. Interconverts 7-oxo- and 7-hydroxy-neurosteroids such as 7-oxopregnenolone and 7beta-hydroxypregnenolone, 7-oxodehydroepiandrosterone (3beta-hydroxy-5-androstene-7,17-dione) and 7beta-hydroxydehydroepiandrosterone (3beta,7beta-dihydroxyandrost-5-en-17-one), among others. Catalyzes reversibly the conversion of the major dietary oxysterol, 7-ketocholesterol (7-oxocholesterol), into the more polar 7-beta-hydroxycholesterol and 7-alpha-hhydroxycholesterol metabolites. 7-oxocholesterol is one of the most important oxysterols, it participates in several events such as induction of apoptosis, accumulation in atherosclerotic lesions, lipid peroxidation, and induction of foam cell formation. Mediates the 7-oxo reduction of 7-oxolithocholate mainly to chenodeoxycholate, and to a lesser extent to ursodeoxycholate, both in its free form and when conjugated to glycine or taurine, providing a link between glucocorticoid activation and bile acid metabolism. Catalyzes the synthesis of 7-beta-25-dihydroxycholesterol from 7-oxo-25-hydroxycholesterol in vitro, which acts as a ligand for the G-protein-coupled receptor (GPCR) Epstein-Barr virus-induced gene 2 (EBI2) and may thereby regulate immune cell migration. The protein is 11-beta-hydroxysteroid dehydrogenase 1 (HSD11B1) of Mesocricetus auratus (Golden hamster).